An 814-amino-acid chain; its full sequence is Immunoglobulin superfamily DCC subclass member 3 (814 aa).

An N-terminal signal peptide occupies residues methionine 1–glycine 35. 4 Ig-like C2-type domains span residues leucine 36–serine 139, aspartate 140–serine 220, proline 238–glutamine 321, and proline 329–threonine 416. Disulfide bonds link cysteine 63-cysteine 117 and cysteine 160-cysteine 209. N-linked (GlcNAc...) asparagine glycosylation occurs at asparagine 93. Asparagine 246 is a glycosylation site (N-linked (GlcNAc...) asparagine). 2 cysteine pairs are disulfide-bonded: cysteine 259–cysteine 307 and cysteine 351–cysteine 400. Asparagine 381 and asparagine 382 each carry an N-linked (GlcNAc...) asparagine glycan. Fibronectin type-III domains lie at proline 426 to glutamate 520 and alanine 523 to arginine 618. 3 N-linked (GlcNAc...) asparagine glycosylation sites follow: asparagine 580, asparagine 604, and asparagine 634. Residues isoleucine 641–phenylalanine 661 traverse the membrane as a helical segment. Disordered regions lie at residues proline 722 to proline 743 and glycine 762 to glutamine 814. The span at threonine 770 to alanine 781 shows a compositional bias: low complexity.

Belongs to the immunoglobulin superfamily. DCC family.

The protein localises to the membrane. This Homo sapiens (Human) protein is Immunoglobulin superfamily DCC subclass member 3 (IGDCC3).